We begin with the raw amino-acid sequence, 120 residues long: MKLTRRESKERRHRRVRGKVQGSPERPRLAVFRSNEHIYAQVIDDTQHHTLAAASTVEPELKSSLASGSNCEASAQIGKLIAARSLEKGITKVVFDRGGNLYHGRIKALAEAAREAGLDF.

Over residues Met1–Glu10 the composition is skewed to basic and acidic residues. The interval Met1–Arg26 is disordered.

This sequence belongs to the universal ribosomal protein uL18 family. Part of the 50S ribosomal subunit; part of the 5S rRNA/L5/L18/L25 subcomplex. Contacts the 5S and 23S rRNAs.

Its function is as follows. This is one of the proteins that bind and probably mediate the attachment of the 5S RNA into the large ribosomal subunit, where it forms part of the central protuberance. The polypeptide is Large ribosomal subunit protein uL18 (Nostoc sp. (strain PCC 7120 / SAG 25.82 / UTEX 2576)).